Consider the following 158-residue polypeptide: Transcription elongation factor GreA (158 aa).

It belongs to the GreA/GreB family.

Functionally, necessary for efficient RNA polymerase transcription elongation past template-encoded arresting sites. The arresting sites in DNA have the property of trapping a certain fraction of elongating RNA polymerases that pass through, resulting in locked ternary complexes. Cleavage of the nascent transcript by cleavage factors such as GreA or GreB allows the resumption of elongation from the new 3'terminus. GreA releases sequences of 2 to 3 nucleotides. This Baumannia cicadellinicola subsp. Homalodisca coagulata protein is Transcription elongation factor GreA.